A 391-amino-acid polypeptide reads, in one-letter code: Steroid 3-ketoacyl-CoA thiolase (391 aa).

Cys-93 acts as the Acyl-thioester intermediate in catalysis. CoA is bound by residues Gln-151, 221-223 (RET), and Ser-246. Residues His-347 and Cys-377 each act as proton acceptor in the active site. Position 379 (Gly-379) interacts with substrate.

It belongs to the thiolase-like superfamily. Thiolase family. Dimer of dimers.

It carries out the reaction an acyl-CoA + acetyl-CoA = a 3-oxoacyl-CoA + CoA. The catalysed reaction is 3-oxochol-4-en-22-oyl-CoA + acetyl-CoA = 3,22-dioxochol-4-en-24-oyl-CoA + CoA. It functions in the pathway steroid metabolism; cholesterol degradation. In terms of biological role, involved in the beta-oxidation of the cholesterol side chain. It is important for utilization of cholesterol as a sole carbon source in vitro and for full virulence in the chronic stage of mouse lung infection. Catalyzes the thiolysis of 3,22-dioxochol-4-en-24-oyl-CoA to yield 3-oxo-4-pregnene-20-carboxyl-CoA (3-OPC-CoA) and acetyl-CoA. Also able to use acetoacetyl-CoA (AcAcCoA) as substrate. The protein is Steroid 3-ketoacyl-CoA thiolase (fadA5) of Mycobacterium tuberculosis (strain ATCC 25618 / H37Rv).